Reading from the N-terminus, the 1491-residue chain is Terminal uridylyltransferase 7 (1491 aa).

Position 64 is a phosphothreonine (threonine 64). Phosphoserine is present on residues serine 132 and serine 172. A disordered region spans residues 165–203 (MSEMEAGSPENKKQRSRPRKPRRTRTEDSEQDGDLDGPV). Positions 178 to 187 (QRSRPRKPRR) are enriched in basic residues. The segment at 244-274 (YTCKLCDALIDSIPFAHKHIKEKRHKKNLKE) adopts a Matrin-type zinc-finger fold. The 50-residue stretch at 551-600 (VGQLWVELLRFYALEFNLADLVISIRVKELISRESKDWPKKRIAIEDPYS) folds into the PAP-associated 1 domain. Serine 600 and serine 747 each carry phosphoserine. Disordered regions lie at residues 740–774 (AELP…KHPE) and 834–911 (QSRT…CGEN). Residues 844-857 (DDEEEEEEEEEEEE) show a composition bias toward acidic residues. Position 865 is a phosphothreonine (threonine 865). Acidic residues predominate over residues 885 to 897 (GEEDALSEEDDLA). Serine 891 is modified (phosphoserine). A sufficient for monouridylation activity region spans residues 947–1491 (RKLTFTKGKS…ASVKRTQQES (545 aa)). A CCHC-type 1 zinc finger spans residues 959–976 (VVCSLCKREGHLKKDCPE). UTP contacts are provided by residues 1043-1046 (SSKN), 1053-1056 (SDLD), asparagine 1126, lysine 1148, 1166-1170 (SYAYT), and histidine 1282. Mg(2+) is bound by residues aspartate 1054 and aspartate 1056. In terms of domain architecture, PAP-associated 2 spans 1230–1282 (VGQLWLGLLRFYTEEFDFKEHVISIRRKSLLTTFKKQWTSKYIVIEDPFDLNH). The segment at 1341 to 1358 (RCCRICGKIGHFMKDCPM) adopts a CCHC-type 2 zinc-finger fold. Disordered regions lie at residues 1362–1399 (VRRR…EKEV) and 1463–1491 (PQFK…QQES). Basic and acidic residues predominate over residues 1377–1399 (SESKEKRSKEDKEIQNKYTEKEV). The CCHC-type 3 zinc finger occupies 1447-1464 (KRCFICGREGHIKKECPQ). Over residues 1470 to 1481 (GSLSSKYMTQGR) the composition is skewed to polar residues.

Belongs to the DNA polymerase type-B-like family. Requires Mg(2+) as cofactor. It depends on Mn(2+) as a cofactor.

It is found in the cytoplasm. It carries out the reaction RNA(n) + UTP = RNA(n)-3'-uridine ribonucleotide + diphosphate. In terms of biological role, uridylyltransferase that mediates the terminal uridylation of mRNAs with short (less than 25 nucleotides) poly(A) tails, hence facilitating global mRNA decay. Essential for both oocyte maturation and fertility. Through 3' terminal uridylation of mRNA, sculpts, with TUT7, the maternal transcriptome by eliminating transcripts during oocyte growth. Involved in microRNA (miRNA)-induced gene silencing through uridylation of deadenylated miRNA targets. Also acts as a suppressor of miRNA biogenesis by mediating the terminal uridylation of miRNA precursors, including that of let-7 (pre-let-7). Uridylated pre-let-7 RNA is not processed by Dicer and undergo degradation. Pre-let-7 uridylation is strongly enhanced in the presence of LIN28A. Due to functional redundancy between ZCCHC6 and ZCCHC11, the identification of the specific role of each of these proteins is difficult. Involved in microRNA (miRNA)-induced gene silencing through uridylation of deadenylated miRNA targets. Also functions as an integral regulator of microRNA biogenesiS using 3 different uridylation mechanisms. Acts as a suppressor of miRNA biogenesis by mediating the terminal uridylation of some miRNA precursors, including that of let-7 (pre-let-7). Uridylated pre-let-7 RNA is not processed by Dicer and undergo degradation. Pre-let-7 oligouridylation is strongly enhanced in the presence of LIN28A. In the absence of LIN28A, TUT7 and TUT4 monouridylate group II pre-miRNAs, which includes most of pre-let7 members, that shapes an optimal 3' end overhang for efficient processing. Add oligo-U tails to truncated pre-miRNAS with a 5' overhang which may promote rapid degradation of non-functional pre-miRNA species. Does not play a role in replication-dependent histone mRNA degradation. Due to functional redundancy between TUT4 and TUT7, the identification of the specific role of each of these proteins is difficult. TUT4 and TUT7 restrict retrotransposition of long interspersed element-1 (LINE-1) in cooperation with MOV10 counteracting the RNA chaperonne activity of L1RE1. TUT7 uridylates LINE-1 mRNAs in the cytoplasm which inhibits initiation of reverse transcription once in the nucleus, whereas uridylation by TUT4 destabilizes mRNAs in cytoplasmic ribonucleoprotein granules. The protein is Terminal uridylyltransferase 7 of Mus musculus (Mouse).